The sequence spans 1407 residues: Clustered mitochondria protein (1407 aa).

The span at 1–12 (MAGKSNKSKAKR) shows a compositional bias: basic residues. Disordered regions lie at residues 1–36 (MAGK…PVAA) and 83–103 (IPKA…PKQG). Positions 14–24 (AQSTTTNSTTD) are enriched in polar residues. The Clu domain maps to 384–670 (PDHKRDAARA…RVTPRDANYT (287 aa)). The segment at 724-760 (IDGEANGASNSDQKSISDKQNTTAEDYAAGSSESSKS) is disordered. Residues 730–747 (GASNSDQKSISDKQNTTA) show a composition bias toward polar residues. TPR repeat units lie at residues 1025–1058 (AKDL…LQQV), 1067–1100 (ANCC…NERC), 1109–1142 (AHSY…LGLS), 1151–1184 (AATF…NERL), and 1193–1226 (AVCY…LVKQ). A disordered region spans residues 1358–1407 (VSSEKGGENGEAKVQEKKESSENGKTENLAPAGLGAGLTSLDKKKQKAKK). The span at 1362–1382 (KGGENGEAKVQEKKESSENGK) shows a compositional bias: basic and acidic residues.

Belongs to the CLU family.

The protein localises to the cytoplasm. Functionally, mRNA-binding protein involved in proper cytoplasmic distribution of mitochondria. Together with REC2, REC3 and FMT/CLU, contributes to the establishment of the cellular volume devoted to the chloroplast compartment. The protein is Clustered mitochondria protein of Arabidopsis thaliana (Mouse-ear cress).